We begin with the raw amino-acid sequence, 226 residues long: PKHD-type hydroxylase PST_0995 (226 aa).

The region spanning 78–178 is the Fe2OG dioxygenase domain; that stretch reads KVFPPLFNCY…RLASFFWIQS (101 aa). 3 residues coordinate Fe cation: His96, Asp98, and His159. Arg169 serves as a coordination point for 2-oxoglutarate.

It depends on Fe(2+) as a cofactor. L-ascorbate is required as a cofactor.

The protein is PKHD-type hydroxylase PST_0995 of Stutzerimonas stutzeri (strain A1501) (Pseudomonas stutzeri).